The primary structure comprises 239 residues: Uridylate kinase (239 aa).

12–15 (KLSG) is an ATP binding site. Gly54 serves as a coordination point for UMP. Gly55 and Arg59 together coordinate ATP. Residues Asp74 and 135–142 (TGNPYFTT) each bind UMP. The ATP site is built by Thr162, Tyr168, and Asp171.

The protein belongs to the UMP kinase family. In terms of assembly, homohexamer.

The protein resides in the cytoplasm. The catalysed reaction is UMP + ATP = UDP + ADP. It participates in pyrimidine metabolism; CTP biosynthesis via de novo pathway; UDP from UMP (UMPK route): step 1/1. Inhibited by UTP. In terms of biological role, catalyzes the reversible phosphorylation of UMP to UDP. This is Uridylate kinase from Fusobacterium nucleatum subsp. nucleatum (strain ATCC 25586 / DSM 15643 / BCRC 10681 / CIP 101130 / JCM 8532 / KCTC 2640 / LMG 13131 / VPI 4355).